The sequence spans 45 residues: MVYKCAHCKQTVEVDKDMKGVRCQYCGHRILIKERPTAIKRVPAV.

Zn(2+) contacts are provided by C8, C23, and C26.

It belongs to the archaeal Rpo12/eukaryotic RPC10 RNA polymerase subunit family. In terms of assembly, part of the RNA polymerase complex. Requires Zn(2+) as cofactor.

The protein localises to the cytoplasm. It carries out the reaction RNA(n) + a ribonucleoside 5'-triphosphate = RNA(n+1) + diphosphate. DNA-dependent RNA polymerase (RNAP) catalyzes the transcription of DNA into RNA using the four ribonucleoside triphosphates as substrates. The sequence is that of DNA-directed RNA polymerase subunit Rpo12 from Methanocella arvoryzae (strain DSM 22066 / NBRC 105507 / MRE50).